Here is a 213-residue protein sequence, read N- to C-terminus: Orotate phosphoribosyltransferase (213 aa).

Residue K26 coordinates 5-phospho-alpha-D-ribose 1-diphosphate. An orotate-binding site is contributed by 34 to 35 (FF). 5-phospho-alpha-D-ribose 1-diphosphate-binding positions include 72-73 (YK), R99, K100, K103, H105, and 124-132 (DDVITAGTA). T128 and R156 together coordinate orotate.

It belongs to the purine/pyrimidine phosphoribosyltransferase family. PyrE subfamily. Homodimer. It depends on Mg(2+) as a cofactor.

It carries out the reaction orotidine 5'-phosphate + diphosphate = orotate + 5-phospho-alpha-D-ribose 1-diphosphate. It participates in pyrimidine metabolism; UMP biosynthesis via de novo pathway; UMP from orotate: step 1/2. Catalyzes the transfer of a ribosyl phosphate group from 5-phosphoribose 1-diphosphate to orotate, leading to the formation of orotidine monophosphate (OMP). This Photorhabdus laumondii subsp. laumondii (strain DSM 15139 / CIP 105565 / TT01) (Photorhabdus luminescens subsp. laumondii) protein is Orotate phosphoribosyltransferase.